An 855-amino-acid chain; its full sequence is Suppressor of tumorigenicity 14 protein homolog (855 aa).

Topologically, residues 1–55 are cytoplasmic; it reads MGSNRGRKAGGGSQDFGAGLKYNSRLENMNGFEEGVEFLPANNAKKVEKRGPRRW. Residue Ser13 is modified to Phosphoserine. A helical; Signal-anchor for type II membrane protein membrane pass occupies residues 56–76; it reads VVLVAVLFSFLLLSLMAGLLV. Residues 77 to 855 lie on the Extracellular side of the membrane; that stretch reads WHFHYRNVRV…RDWIKEHTGV (779 aa). The region spanning 86 to 203 is the SEA domain; sequence VQKVFNGHLR…TSVVAFPIDP (118 aa). A glycan (N-linked (GlcNAc...) asparagine) is linked at Asn107. Cys214 and Cys244 are disulfide-bonded. 2 consecutive CUB domains span residues 214-331 and 340-444; these read CSFA…EATF and CGGF…LAEY. Asn302 and Asn365 each carry an N-linked (GlcNAc...) asparagine glycan. 2 disulfides stabilise this stretch: Cys340–Cys366 and Cys397–Cys410. N-linked (GlcNAc...) asparagine glycosylation occurs at Asn421. LDL-receptor class A domains lie at 451–488, 489–522, 523–561, and 565–604; these read DPCPGMFMCKTGRCIRKELRCDGWADCPDYSDERYCRC, NATHQFTCKNQFCKPLFWVCDSVNDCGDGSDEEG, CSCPAGSFKCSNGKCLPQSQKCNGKDNCGDGSDEASCDS, and VSCTKYTYRCQNGLCLSKGNPECDGKTDCSDGSDEKNCDC. Disulfide bonds link Cys453/Cys464, Cys459/Cys477, Cys471/Cys486, Cys488/Cys501, Cys496/Cys514, Cys508/Cys523, Cys525/Cys537, Cys532/Cys550, Cys544/Cys559, Cys567/Cys579, Cys574/Cys593, Cys587/Cys602, and Cys641/Cys657. N-linked (GlcNAc...) asparagine glycosylation is present at Asn489. The Peptidase S1 domain occupies 615–854; the sequence is VVGGTNADEG…VRDWIKEHTG (240 aa). Active-site charge relay system residues include His656 and Asp711. A glycan (N-linked (GlcNAc...) asparagine) is linked at Asn772. Cystine bridges form between Cys776-Cys790 and Cys801-Cys830. The Charge relay system role is filled by Ser805.

The protein belongs to the peptidase S1 family. Interacts with CDCP1. May interact with TMEFF1. Highly expressed in intestine, kidney, lung, and thymus. Not expressed in skeletal muscle, liver, heart, testis and brain.

Its subcellular location is the membrane. The enzyme catalyses Cleaves various synthetic substrates with Arg or Lys at the P1 position and prefers small side-chain amino acids, such as Ala and Gly, at the P2 position.. Functionally, exhibits trypsin-like activity as defined by cleavage of synthetic substrates with Arg or Lys as the P1 site. Involved in the terminal differentiation of keratinocytes through prostasin (PRSS8) activation and filaggrin (FLG) processing. Proteolytically cleaves and therefore activates TMPRSS13. The polypeptide is Suppressor of tumorigenicity 14 protein homolog (St14) (Mus musculus (Mouse)).